The sequence spans 295 residues: MNYVFCIIGIIGYRLCLEQLSIYNNLYNWLIKKGYSVILENNIAQALNLNNVISGSTFDIGEKADLAIIIGGDGSMLRIAKILSNYPIKVIGINTGNLGFLTDLNPKSALSTLNYILNGNFYEEKRFLLNVITIKNNIKSKKHILNEVVVHSNNVAKMIEFKVYIDDVFSFFQRADGLIISTPTGSTAYSLSAGGPILMPLLNAIIIIPMFPHGLYSRPLVISAKSKIKIKFSKKILNLSISCDGTSPFKVYRNNEIVIKKSKKFLKLIHSNNYNYFNVLRKKLGWSKKFFKKIK.

The active-site Proton acceptor is D73. Residues 73–74, R78, 146–147, K157, R174, D176, and 187–192 contribute to the NAD(+) site; these read DG, NE, and TAYSLS.

It belongs to the NAD kinase family. Requires a divalent metal cation as cofactor.

It localises to the cytoplasm. It catalyses the reaction NAD(+) + ATP = ADP + NADP(+) + H(+). Functionally, involved in the regulation of the intracellular balance of NAD and NADP, and is a key enzyme in the biosynthesis of NADP. Catalyzes specifically the phosphorylation on 2'-hydroxyl of the adenosine moiety of NAD to yield NADP. The chain is NAD kinase from Wigglesworthia glossinidia brevipalpis.